Consider the following 211-residue polypeptide: Probable GTP-binding protein EngB (211 aa).

The EngB-type G domain maps to 22–195; that stretch reads PFPEVAFAGK…WQLIDSYVLP (174 aa). Residues 30–37, 57–61, 75–78, 142–145, and 174–176 contribute to the GTP site; these read GKSNVGKS, GKTQT, DLPG, TKLD, and FSS. Mg(2+)-binding residues include Ser-37 and Thr-59.

Belongs to the TRAFAC class TrmE-Era-EngA-EngB-Septin-like GTPase superfamily. EngB GTPase family. Requires Mg(2+) as cofactor.

Necessary for normal cell division and for the maintenance of normal septation. This chain is Probable GTP-binding protein EngB, found in Lachnospira eligens (strain ATCC 27750 / DSM 3376 / VPI C15-48 / C15-B4) (Eubacterium eligens).